The sequence spans 216 residues: Somatotropin (216 aa).

Positions 1 to 26 (MAADSQTPWLLTFSLLCLLWPQEAGA) are cleaved as a signal peptide. His45 serves as a coordination point for Zn(2+). A disulfide bridge connects residues Cys78 and Cys189. Ser131 carries the phosphoserine modification. Glu198 lines the Zn(2+) pocket. An intrachain disulfide couples Cys206 to Cys214.

The protein belongs to the somatotropin/prolactin family.

The protein localises to the secreted. Plays an important role in growth control. Its major role in stimulating body growth is to stimulate the liver and other tissues to secrete IGF1. It stimulates both the differentiation and proliferation of myoblasts. It also stimulates amino acid uptake and protein synthesis in muscle and other tissues. The protein is Somatotropin (Gh1) of Rattus norvegicus (Rat).